The primary structure comprises 443 residues: ATP-dependent protease ATPase subunit HslU (443 aa).

Residues Ile18, 60-65 (GVGKTE), Asp256, Glu321, and Arg393 each bind ATP.

Belongs to the ClpX chaperone family. HslU subfamily. In terms of assembly, a double ring-shaped homohexamer of HslV is capped on each side by a ring-shaped HslU homohexamer. The assembly of the HslU/HslV complex is dependent on binding of ATP.

It localises to the cytoplasm. Functionally, ATPase subunit of a proteasome-like degradation complex; this subunit has chaperone activity. The binding of ATP and its subsequent hydrolysis by HslU are essential for unfolding of protein substrates subsequently hydrolyzed by HslV. HslU recognizes the N-terminal part of its protein substrates and unfolds these before they are guided to HslV for hydrolysis. The polypeptide is ATP-dependent protease ATPase subunit HslU (Yersinia pestis bv. Antiqua (strain Antiqua)).